Here is an 856-residue protein sequence, read N- to C-terminus: DNA gyrase subunit A (856 aa).

The Topo IIA-type catalytic domain occupies 45 to 517 (LPDARDGLKP…DDGTVTHEDL (473 aa)). The active-site O-(5'-phospho-DNA)-tyrosine intermediate is the Tyr133. A GyrA-box motif is present at residues 544 to 550 (QHRGGKG). Positions 822–856 (TVASVDTHPRTDDSSEADSGDGESESENATATTPS) are disordered. Positions 835-847 (SSEADSGDGESES) are enriched in acidic residues.

Belongs to the type II topoisomerase GyrA/ParC subunit family. As to quaternary structure, heterotetramer, composed of two GyrA and two GyrB chains. In the heterotetramer, GyrA contains the active site tyrosine that forms a transient covalent intermediate with DNA, while GyrB binds cofactors and catalyzes ATP hydrolysis.

The protein localises to the cytoplasm. It catalyses the reaction ATP-dependent breakage, passage and rejoining of double-stranded DNA.. Functionally, a type II topoisomerase that negatively supercoils closed circular double-stranded (ds) DNA in an ATP-dependent manner to modulate DNA topology and maintain chromosomes in an underwound state. Negative supercoiling favors strand separation, and DNA replication, transcription, recombination and repair, all of which involve strand separation. Also able to catalyze the interconversion of other topological isomers of dsDNA rings, including catenanes and knotted rings. Type II topoisomerases break and join 2 DNA strands simultaneously in an ATP-dependent manner. This chain is DNA gyrase subunit A, found in Haloquadratum walsbyi (strain DSM 16790 / HBSQ001).